Reading from the N-terminus, the 141-residue chain is Hemoglobin subunit alpha-D (141 aa).

Residues 1-141 form the Globin domain; the sequence is MLTEDDKQLI…VSAVLAEKYR (141 aa). Heme b is bound by residues H58 and H87.

Belongs to the globin family. Heterotetramer of two alpha-D chains and two beta chains. As to expression, red blood cells.

Functionally, involved in oxygen transport from the lung to the various peripheral tissues. The protein is Hemoglobin subunit alpha-D (HBAD) of Chelonoidis niger (Galapagos giant tortoise).